Reading from the N-terminus, the 364-residue chain is uncharacterized protein (364 aa).

Residues Met1–Glu17 are compositionally biased toward acidic residues. The segment at Met1 to Met61 is disordered. Basic and acidic residues predominate over residues Thr19–Gln31.

This is an uncharacterized protein from Caenorhabditis elegans.